The primary structure comprises 85 residues: Progonadoliberin-2 (85 aa).

A signal peptide spans methionine 1 to alanine 23. Glutamine 24 bears the Pyrrolidone carboxylic acid mark. At glycine 33 the chain carries Glycine amide.

This sequence belongs to the GnRH family.

Its subcellular location is the secreted. Functionally, stimulates the secretion of gonadotropins. The sequence is that of Progonadoliberin-2 (gnrh2) from Morone saxatilis (Striped bass).